The chain runs to 447 residues: Ameloblastin (447 aa).

Positions 1-26 are cleaved as a signal peptide; it reads MSASKIPLFKMKDLILILCLLEMSFA. Residue Pro37 is modified to Hydroxyproline. Residue Ser43 is modified to Phosphoserine. O-linked (GalNAc...) serine glycosylation is present at Ser112. Disordered stretches follow at residues 165–211, 307–338, and 353–383; these read QQVA…DFAD, DSPV…NLEN, and LLAL…PAAA. 2 repeat units span residues 189–201 and 202–214.

It belongs to the ameloblastin family. Ameloblast-specific. Located at the Tomes processes of secretory ameloblasts and in the sheath space between rod-interrod enamel.

It is found in the secreted. The protein resides in the extracellular space. It localises to the extracellular matrix. Functionally, involved in the mineralization and structural organization of enamel. This Homo sapiens (Human) protein is Ameloblastin (AMBN).